The sequence spans 117 residues: Large ribosomal subunit protein uL18 (117 aa).

This sequence belongs to the universal ribosomal protein uL18 family. Part of the 50S ribosomal subunit; part of the 5S rRNA/L5/L18/L25 subcomplex. Contacts the 5S and 23S rRNAs.

This is one of the proteins that bind and probably mediate the attachment of the 5S RNA into the large ribosomal subunit, where it forms part of the central protuberance. The sequence is that of Large ribosomal subunit protein uL18 from Vibrio atlanticus (strain LGP32) (Vibrio splendidus (strain Mel32)).